Reading from the N-terminus, the 470-residue chain is Uronate isomerase (470 aa).

It belongs to the metallo-dependent hydrolases superfamily. Uronate isomerase family.

The enzyme catalyses D-glucuronate = D-fructuronate. It catalyses the reaction aldehydo-D-galacturonate = keto-D-tagaturonate. The protein operates within carbohydrate metabolism; pentose and glucuronate interconversion. The chain is Uronate isomerase from Cutibacterium acnes (strain DSM 16379 / KPA171202) (Propionibacterium acnes).